The sequence spans 163 residues: uncharacterized protein (163 aa).

The interval 30–163 is disordered; that stretch reads GNENTSVSSD…IYKKLGKKKR (134 aa). Basic and acidic residues predominate over residues 88–118; it reads ERQLQKKKEAEKIEGGKNHDNLKRKLNKVGD. The segment covering 119 to 133 has biased composition (acidic residues); the sequence is ELNEQQSDTDDDDDD. A Phosphoserine modification is found at Ser125. Residue Thr127 is modified to Phosphothreonine.

Its subcellular location is the nucleus. The protein localises to the nucleolus. This is an uncharacterized protein from Schizosaccharomyces pombe (strain 972 / ATCC 24843) (Fission yeast).